We begin with the raw amino-acid sequence, 398 residues long: Cystathionine gamma-lyase (398 aa).

Residues R61, Y113, and R118 each contribute to the substrate site. Position 211 is an N6-(pyridoxal phosphate)lysine (K211). Residue E338 coordinates substrate.

The protein belongs to the trans-sulfuration enzymes family. Homotetramer. Interacts with CALM in a calcium-dependent manner. The cofactor is pyridoxal 5'-phosphate. Detected in liver and kidney, and at lower levels in small intestine (at protein level). Highly expressed in liver, kidney and lung, detected at lower levels in stomach, small intestine and adipose tissue, and hardly found in heart, bone, and thymus.

It is found in the cytoplasm. The catalysed reaction is L,L-cystathionine + H2O = 2-oxobutanoate + L-cysteine + NH4(+). It carries out the reaction L-cysteine + H2O = hydrogen sulfide + pyruvate + NH4(+) + H(+). The enzyme catalyses L-homocysteine + H2O = 2-oxobutanoate + hydrogen sulfide + NH4(+) + H(+). It catalyses the reaction L-homoserine = 2-oxobutanoate + NH4(+). The catalysed reaction is L-selenocystathionine + H2O = L-selenocysteine + 2-oxobutanoate + NH4(+). The protein operates within amino-acid biosynthesis; L-cysteine biosynthesis; L-cysteine from L-homocysteine and L-serine: step 2/2. Activated by calmodulin in the presence of calcium ions. Catalyzes the last step in the trans-sulfuration pathway from L-methionine to L-cysteine in a pyridoxal-5'-phosphate (PLP)-dependent manner, which consists on cleaving the L,L-cystathionine molecule into L-cysteine, ammonia and 2-oxobutanoate. Part of the L-cysteine derived from the trans-sulfuration pathway is utilized for biosynthesis of the ubiquitous antioxidant glutathione. Besides its role in the conversion of L-cystathionine into L-cysteine, it utilizes L-cysteine and L-homocysteine as substrates (at much lower rates than L,L-cystathionine) to produce hydrogen sulfide (H2S). In vitro, it converts two L-cysteine molecules into lanthionine and H2S, and two L-homocysteine molecules to homolanthionine and H2S, which can be particularly relevant under conditions of severe hyperhomocysteinemia. Lanthionine and homolanthionine are structural homologs of L,L-cystathionine that differ by the absence or presence of an extra methylene group, respectively. Acts as a cysteine-protein sulfhydrase by mediating sulfhydration of target proteins: sulfhydration consists of converting -SH groups into -SSH on specific cysteine residues of target proteins such as GAPDH, PTPN1 and NF-kappa-B subunit RELA, thereby regulating their function. By generating the gasotransmitter H2S, it participates in a number of physiological processes such as vasodilation, bone protection, and inflammation. Plays an essential role in myogenesis by contributing to the biogenesis of H2S in skeletal muscle tissue. Can also accept homoserine as substrate. Catalyzes the elimination of selenocystathionine (which can be derived from the diet) to yield selenocysteine, ammonia and 2-oxobutanoate. The chain is Cystathionine gamma-lyase (Cth) from Mus musculus (Mouse).